Consider the following 416-residue polypeptide: MENIKKNDIEIHDMLVKELKRQRETIELIASENIASQSVMEAQGSCLTNKYAEGYPGKRYYGGCEVVDIAETIAIERAKKLFNARFANVQPHSGAQANFAILLALLKPGDTIMGLSLSHGGHLTHGSPFNVSGKWFNVISYSVSEKTGCIDYNEIESLVLEHKPKLIISGASAYSRIWDWERISGIAKKVSAYHMSDMAHYAGLVAAGIYPSPVGYADITTTTTHKTLRGPRGGLILTNNEELAKKINSAIFPGEQGGPLMHVIAAKAVAFGEALKPEFKEYQKQVLANAKQLAETLEEGKLKIVSGGTDSHMFLVDLRPLNVKGKNAQDTLEKAGITLNKNGIPYDLEKPTMTSGIRIGSPAVTTRGMKEPEMVKIAEAIIKVLKNIDNEKIISEVSTDMLKLCQEFPIYRGLEY.

(6S)-5,6,7,8-tetrahydrofolate-binding positions include Leu117 and 121-123; that span reads GHL. Lys226 bears the N6-(pyridoxal phosphate)lysine mark. Glu242 is a (6S)-5,6,7,8-tetrahydrofolate binding site.

It belongs to the SHMT family. Homodimer. Pyridoxal 5'-phosphate serves as cofactor.

Its subcellular location is the cytoplasm. The enzyme catalyses (6R)-5,10-methylene-5,6,7,8-tetrahydrofolate + glycine + H2O = (6S)-5,6,7,8-tetrahydrofolate + L-serine. It participates in one-carbon metabolism; tetrahydrofolate interconversion. It functions in the pathway amino-acid biosynthesis; glycine biosynthesis; glycine from L-serine: step 1/1. Its function is as follows. Catalyzes the reversible interconversion of serine and glycine with tetrahydrofolate (THF) serving as the one-carbon carrier. This reaction serves as the major source of one-carbon groups required for the biosynthesis of purines, thymidylate, methionine, and other important biomolecules. Also exhibits THF-independent aldolase activity toward beta-hydroxyamino acids, producing glycine and aldehydes, via a retro-aldol mechanism. The sequence is that of Serine hydroxymethyltransferase from Endomicrobium trichonymphae.